The following is a 349-amino-acid chain: Probable trehalose-phosphate phosphatase H (349 aa).

The protein belongs to the trehalose phosphatase family. A divalent metal cation serves as cofactor.

It carries out the reaction alpha,alpha-trehalose 6-phosphate + H2O = alpha,alpha-trehalose + phosphate. Its pathway is glycan biosynthesis; trehalose biosynthesis. Its function is as follows. Removes the phosphate from trehalose 6-phosphate to produce free trehalose. Trehalose accumulation in plant may improve abiotic stress tolerance. In Arabidopsis thaliana (Mouse-ear cress), this protein is Probable trehalose-phosphate phosphatase H (TPPH).